Reading from the N-terminus, the 590-residue chain is Selenoprotein N (590 aa).

Residues 1–26 (MGRARPGQRGPPSPGPAAQPPAPPRR) form a disordered region. Positions 1–43 (MGRARPGQRGPPSPGPAAQPPAPPRRRARSLALLGALLAAAAA) are cleaved as a signal peptide. The span at 9 to 23 (RGPPSPGPAAQPPAP) shows a compositional bias: pro residues. One can recognise an EF-hand domain in the interval 67 to 102 (TLGTDGLFLFSSLDTDGDMYISPEEFKPIAEKLTGS). An N-linked (GlcNAc...) asparagine glycan is attached at Asn-126. Sec-127 is a non-standard amino acid (selenocysteine). N-linked (GlcNAc...) asparagine glycosylation occurs at Asn-190. Sec-462 is a non-standard amino acid (selenocysteine). Residues Asn-483, Asn-505, and Asn-531 are each glycosylated (N-linked (GlcNAc...) asparagine).

In terms of assembly, interacts with RYR1, RYR2 and RYR3. In terms of processing, N-glycosylated. In terms of tissue distribution, isoform 1 and isoform 2 are expressed in skeletal muscle, brain, lung and placenta. Isoform 2 is also expressed in heart, diaphragm and stomach.

It localises to the endoplasmic reticulum membrane. Its function is as follows. Plays an important role in cell protection against oxidative stress and in the regulation of redox-related calcium homeostasis. Regulates the calcium level of the ER by protecting the calcium pump ATP2A2 against the oxidoreductase ERO1A-mediated oxidative damage. Within the ER, ERO1A activity increases the concentration of H(2)O(2), which attacks the luminal thiols in ATP2A2 and thus leads to cysteinyl sulfenic acid formation (-SOH) and SEPN1 reduces the SOH back to free thiol (-SH), thus restoring ATP2A2 activity. Acts as a modulator of ryanodine receptor (RyR) activity: protects RyR from oxidation due to increased oxidative stress, or directly controls the RyR redox state, regulating the RyR-mediated calcium mobilization required for normal muscle development and differentiation. Essential for muscle regeneration and satellite cell maintenance in skeletal muscle. The chain is Selenoprotein N from Homo sapiens (Human).